Reading from the N-terminus, the 417-residue chain is UDP-N-acetylglucosamine 1-carboxyvinyltransferase (417 aa).

22-23 lines the phosphoenolpyruvate pocket; the sequence is KN. Arg-93 is a binding site for UDP-N-acetyl-alpha-D-glucosamine. Catalysis depends on Cys-117, which acts as the Proton donor. Cys-117 carries the post-translational modification 2-(S-cysteinyl)pyruvic acid O-phosphothioketal. Residues 122-126, Asp-305, and Ile-327 each bind UDP-N-acetyl-alpha-D-glucosamine; that span reads RPVDQ.

Belongs to the EPSP synthase family. MurA subfamily.

The protein localises to the cytoplasm. It carries out the reaction phosphoenolpyruvate + UDP-N-acetyl-alpha-D-glucosamine = UDP-N-acetyl-3-O-(1-carboxyvinyl)-alpha-D-glucosamine + phosphate. The protein operates within cell wall biogenesis; peptidoglycan biosynthesis. Its function is as follows. Cell wall formation. Adds enolpyruvyl to UDP-N-acetylglucosamine. The protein is UDP-N-acetylglucosamine 1-carboxyvinyltransferase of Nitrosomonas europaea (strain ATCC 19718 / CIP 103999 / KCTC 2705 / NBRC 14298).